Reading from the N-terminus, the 330-residue chain is Probable pectinesterase 55 (330 aa).

Positions 1 to 24 (MGTHRIILGLAALCCFCLPHLIEA) are cleaved as a signal peptide. Residues Asn-38 and Asn-52 are each glycosylated (N-linked (GlcNAc...) asparagine). Asp-161 serves as the catalytic Proton donor. The active-site Nucleophile is the Asp-182. Arg-243 and Trp-245 together coordinate substrate. N-linked (GlcNAc...) asparagine glycosylation is found at Asn-257 and Asn-292.

The protein belongs to the pectinesterase family.

It localises to the secreted. The protein localises to the cell wall. The catalysed reaction is [(1-&gt;4)-alpha-D-galacturonosyl methyl ester](n) + n H2O = [(1-&gt;4)-alpha-D-galacturonosyl](n) + n methanol + n H(+). It functions in the pathway glycan metabolism; pectin degradation; 2-dehydro-3-deoxy-D-gluconate from pectin: step 1/5. In terms of biological role, acts in the modification of cell walls via demethylesterification of cell wall pectin. This chain is Probable pectinesterase 55 (PME55), found in Arabidopsis thaliana (Mouse-ear cress).